The following is an 811-amino-acid chain: Abnormal pharyngeal pumping eat-20 (811 aa).

The first 20 residues, 1–20 (MTTFCRVLLIFGIYVAVSCA), serve as a signal peptide directing secretion. Residues 21 to 749 (QSVEDDVFHF…GKQSSAVASW (729 aa)) lie on the Extracellular side of the membrane. N-linked (GlcNAc...) asparagine glycans are attached at residues Asn90, Asn171, and Asn232. 3 consecutive EGF-like domains span residues 220–257 (PPSPCANHECHNNGTCLVSQEGAAMCLCRNGFTGDRCE), 258–293 (LDVCSAVPCQNGGVCRSNNGIAYCECPPAFSGLLCE), and 301–335 (AAPICNPECSNGQCVLKDGQPQCECRQGFTGANCN). 9 disulfides stabilise this stretch: Cys224–Cys235, Cys229–Cys245, Cys247–Cys256, Cys261–Cys272, Cys266–Cys281, Cys283–Cys292, Cys305–Cys314, Cys309–Cys323, and Cys325–Cys334. A glycan (N-linked (GlcNAc...) asparagine) is linked at Asn371. Disordered regions lie at residues 544–579 (FVSPNMPDENEEEEEDETTDETEETFPTPSTMQVAT), 592–659 (FPTT…AIST), and 690–739 (PHPQ…HTSS). Residues 551–567 (DENEEEEEDETTDETEE) are compositionally biased toward acidic residues. Residues 570–579 (PTPSTMQVAT) are compositionally biased toward polar residues. Over residues 597-612 (DMEETDEEEDMTEEVT) the composition is skewed to acidic residues. Residues 626–639 (PSSTTFTTEAPTTT) show a composition bias toward low complexity. Acidic residues-rich tracts occupy residues 640 to 655 (MEEEETTEQEEIESEE) and 705 to 717 (IESEEERTTESNE). A helical membrane pass occupies residues 750 to 770 (IIATIALIVLGSLLLATSLFV). Residues 771 to 811 (LRYIRQSRKLHGKYNPAREEHNLSAAYAMPMSHIAKEERLI) are Cytoplasmic-facing.

The protein resides in the membrane. Regulates pharyngeal pumping during feeding. This Caenorhabditis briggsae protein is Abnormal pharyngeal pumping eat-20 (eat-20).